The following is a 175-amino-acid chain: Cytochrome c homolog (175 aa).

Residues 1–8 (MSGKELNK) lie on the Cytoplasmic side of the membrane. A helical; Signal-anchor membrane pass occupies residues 9–29 (IVAAILFASLIAMMVGFVANI). The Periplasmic segment spans residues 30–175 (LYKPTLELQH…LFLKTYVHDK (146 aa)). 4 residues coordinate heme c: C84, C87, H88, and M150.

This sequence belongs to the cytochrome c family. Binds 1 heme c group covalently per subunit.

It localises to the cell membrane. May be involved in electron transfer from bc1 complex to aa3. The polypeptide is Cytochrome c homolog (cycM) (Rickettsia conorii (strain ATCC VR-613 / Malish 7)).